A 62-amino-acid chain; its full sequence is Alpha-conotoxin Vt1.27 (62 aa).

A signal peptide spans 1 to 21 (MGMRMMFTVFLLVVLATTVVS). Positions 22–40 (FTLDRASDGASAAADLVAR) are excised as a propeptide. Disulfide bonds link Cys-46-Cys-52 and Cys-47-Cys-61.

It belongs to the conotoxin A superfamily. As to expression, expressed by the venom duct.

The protein resides in the secreted. In terms of biological role, the short (45-61) amidated synthetic peptide inhibits the rat neuronal alpha-3-beta-2/CHRNA3-CHRNB2 nicotinic acetylcholine receptor (nAChR) (IC(50)=1.16 uM). It also inhibits Cav2.2/CACNA1C voltage-gated calcium channel (IC(50)=398 nM). In vivo, when tested in rat pain models, this short amidated peptide increases the pain threshold. The protein is Alpha-conotoxin Vt1.27 of Conus planorbis (Planorbis cone).